Here is a 461-residue protein sequence, read N- to C-terminus: Serine carboxypeptidase-like 45 (461 aa).

Residues methionine 1–serine 24 form the signal peptide. Cystine bridges form between cysteine 86–cysteine 340, cysteine 243–cysteine 261, and cysteine 286–cysteine 309. Asparagine 168 is a glycosylation site (N-linked (GlcNAc...) asparagine). Residue serine 177 is part of the active site. Asparagine 244 carries N-linked (GlcNAc...) asparagine glycosylation. Residues aspartate 377 and histidine 434 contribute to the active site.

The protein belongs to the peptidase S10 family. In terms of tissue distribution, ubiquitous.

The protein localises to the secreted. In terms of biological role, probable carboxypeptidase. The chain is Serine carboxypeptidase-like 45 (SCPL45) from Arabidopsis thaliana (Mouse-ear cress).